The following is a 122-amino-acid chain: Prefoldin subunit 1 (122 aa).

It belongs to the prefoldin subunit beta family. Heterohexamer of two PFD-alpha type and four PFD-beta type subunits.

Functionally, binds specifically to cytosolic chaperonin (c-CPN) and transfers target proteins to it. Binds to nascent polypeptide chain and promotes folding in an environment in which there are many competing pathways for nonnative proteins. This is Prefoldin subunit 1 (pfdn1) from Danio rerio (Zebrafish).